Here is a 679-residue protein sequence, read N- to C-terminus: Glycine--tRNA ligase beta subunit (679 aa).

This sequence belongs to the class-II aminoacyl-tRNA synthetase family. As to quaternary structure, tetramer of two alpha and two beta subunits.

It localises to the cytoplasm. The enzyme catalyses tRNA(Gly) + glycine + ATP = glycyl-tRNA(Gly) + AMP + diphosphate. This is Glycine--tRNA ligase beta subunit from Streptococcus pyogenes serotype M2 (strain MGAS10270).